Reading from the N-terminus, the 293-residue chain is Acetylglutamate kinase (293 aa).

Residues 68–69, R90, and N189 contribute to the substrate site; that span reads GG.

The protein belongs to the acetylglutamate kinase family. ArgB subfamily.

Its subcellular location is the cytoplasm. It catalyses the reaction N-acetyl-L-glutamate + ATP = N-acetyl-L-glutamyl 5-phosphate + ADP. The protein operates within amino-acid biosynthesis; L-arginine biosynthesis; N(2)-acetyl-L-ornithine from L-glutamate: step 2/4. Catalyzes the ATP-dependent phosphorylation of N-acetyl-L-glutamate. In Caldicellulosiruptor saccharolyticus (strain ATCC 43494 / DSM 8903 / Tp8T 6331), this protein is Acetylglutamate kinase.